The chain runs to 158 residues: tRNA (cytidine(34)-2'-O)-methyltransferase (158 aa).

S-adenosyl-L-methionine is bound by residues glycine 103, isoleucine 123, and serine 131.

This sequence belongs to the class IV-like SAM-binding methyltransferase superfamily. RNA methyltransferase TrmH family. TrmL subfamily. In terms of assembly, homodimer.

It is found in the cytoplasm. It carries out the reaction cytidine(34) in tRNA + S-adenosyl-L-methionine = 2'-O-methylcytidine(34) in tRNA + S-adenosyl-L-homocysteine + H(+). The catalysed reaction is 5-carboxymethylaminomethyluridine(34) in tRNA(Leu) + S-adenosyl-L-methionine = 5-carboxymethylaminomethyl-2'-O-methyluridine(34) in tRNA(Leu) + S-adenosyl-L-homocysteine + H(+). In terms of biological role, methylates the ribose at the nucleotide 34 wobble position in the two leucyl isoacceptors tRNA(Leu)(CmAA) and tRNA(Leu)(cmnm5UmAA). Catalyzes the methyl transfer from S-adenosyl-L-methionine to the 2'-OH of the wobble nucleotide. The sequence is that of tRNA (cytidine(34)-2'-O)-methyltransferase from Ancylobacter novellus (strain ATCC 8093 / DSM 506 / JCM 20403 / CCM 1077 / IAM 12100 / NBRC 12443 / NCIMB 10456) (Starkeya novella).